The primary structure comprises 110 residues: Carboxysome shell protein CsoS1B (110 aa).

The BMC domain occupies 8–93; it reads ALGMIETRGL…VHSEVEIILP (86 aa).

Belongs to the bacterial microcompartments protein family. CsoS1 subfamily. As to quaternary structure, homohexamer with a small central pore. Interacts with the N-terminus (residues 1-136) of RuBisCO (CbbL).

The protein resides in the carboxysome. Its function is as follows. One of shell proteins of the carboxysome, a polyhedral inclusion where RuBisCO (ribulose bisphosphate carboxylase, ccbL-ccbS) is sequestered. Assembles into hexamers which make sheets that form the facets of the polyhedral carboxysome. The shell probably limits the diffusion of CO(2) into and out of the carboxysome. There are estimated to be 540 CsoS1B proteins per carboxysome. Unlike beta-carboxysomes, alpha-carboxysomes (Cb) can form without cargo protein. CsoS2 is essential for Cb formation and is also capable of targeting foreign proteins to the Cb. The Cb shell assembles with the aid of CsoS2; CsoS1A, CsoS1B and CsoS1C form the majority of the shell while CsoS4A and CsoS4B form vertices. CsoS1D forms pseudohexamers that probably control metabolite flux into and out of the shell. The polypeptide is Carboxysome shell protein CsoS1B (Halothiobacillus neapolitanus (strain ATCC 23641 / c2) (Thiobacillus neapolitanus)).